Reading from the N-terminus, the 197-residue chain is Lipid A acyltransferase PagP (197 aa).

The N-terminal stretch at 1–24 (MMFFKRTILACTVALLFPALPSYA) is a signal peptide. Catalysis depends on residues histidine 69, aspartate 112, and serine 113.

The protein belongs to the lipid A palmitoyltransferase family. In terms of assembly, homodimer.

Its subcellular location is the cell outer membrane. It carries out the reaction a lipid A + a 1,2-diacyl-sn-glycero-3-phosphocholine = a hepta-acyl lipid A + a 2-acyl-sn-glycero-3-phosphocholine. The enzyme catalyses a lipid IVA + a 1,2-diacyl-sn-glycero-3-phosphocholine = a lipid IVB + a 2-acyl-sn-glycero-3-phosphocholine. The catalysed reaction is a lipid IIA + a 1,2-diacyl-sn-glycero-3-phosphocholine = a lipid IIB + a 2-acyl-sn-glycero-3-phosphocholine. In terms of biological role, transfers a fatty acid residue from the sn-1 position of a phospholipid to the N-linked hydroxyfatty acid chain on the proximal unit of lipid A or its precursors. The protein is Lipid A acyltransferase PagP of Serratia proteamaculans (strain 568).